The following is a 79-amino-acid chain: Protein OPG081 (79 aa).

Residues 1 to 3 lie on the Intravirion side of the membrane; that stretch reads MAD. Residues 4–24 traverse the membrane as a helical segment; sequence AITVLTAIGITVLMLLMVISG. Over 25–47 the chain is Virion surface; the sequence is TAMIVKELNPNDIFTMQSLKFNR. Residues 48 to 68 form a helical membrane-spanning segment; sequence AVTIFKYIGLFIYIPGTIILY. Residues 69–79 are Intravirion-facing; the sequence is ATYIKSLLMKS.

Belongs to the orthopoxvirus OPG081 family.

The protein localises to the virion membrane. Envelope protein. This is Protein OPG081 (OPG081) from Variola virus.